Here is a 208-residue protein sequence, read N- to C-terminus: FMN-dependent NADH:quinone oxidoreductase 2 (208 aa).

The protein belongs to the azoreductase type 1 family. In terms of assembly, homodimer. The cofactor is FMN.

The enzyme catalyses 2 a quinone + NADH + H(+) = 2 a 1,4-benzosemiquinone + NAD(+). It carries out the reaction N,N-dimethyl-1,4-phenylenediamine + anthranilate + 2 NAD(+) = 2-(4-dimethylaminophenyl)diazenylbenzoate + 2 NADH + 2 H(+). Quinone reductase that provides resistance to thiol-specific stress caused by electrophilic quinones. In terms of biological role, also exhibits azoreductase activity. Catalyzes the reductive cleavage of the azo bond in aromatic azo compounds to the corresponding amines. In Bacillus anthracis, this protein is FMN-dependent NADH:quinone oxidoreductase 2.